Here is a 326-residue protein sequence, read N- to C-terminus: Beta-ketoacyl-[acyl-carrier-protein] synthase III (326 aa).

Catalysis depends on residues Cys112 and His251. An ACP-binding region spans residues 252–256 (QANSR). Asn281 is a catalytic residue.

This sequence belongs to the thiolase-like superfamily. FabH family. Homodimer.

Its subcellular location is the cytoplasm. The catalysed reaction is malonyl-[ACP] + acetyl-CoA + H(+) = 3-oxobutanoyl-[ACP] + CO2 + CoA. The protein operates within lipid metabolism; fatty acid biosynthesis. Functionally, catalyzes the condensation reaction of fatty acid synthesis by the addition to an acyl acceptor of two carbons from malonyl-ACP. Catalyzes the first condensation reaction which initiates fatty acid synthesis and may therefore play a role in governing the total rate of fatty acid production. Possesses both acetoacetyl-ACP synthase and acetyl transacylase activities. Its substrate specificity determines the biosynthesis of branched-chain and/or straight-chain of fatty acids. The chain is Beta-ketoacyl-[acyl-carrier-protein] synthase III from Clostridium botulinum (strain ATCC 19397 / Type A).